A 770-amino-acid chain; its full sequence is Potassium transporter 25 (770 aa).

The Cytoplasmic segment spans residues 1 to 23 (MDLEAAHGAAAAPGKRRRRARES). The chain crosses the membrane as a helical span at residues 24–44 (WGASLLLAYQSLGVVYGDVAT). Topologically, residues 45 to 70 (SPLYVYKSAFAGDDIQHSAGNEEIYG) are extracellular. Residues 71–91 (VLSFVFWTLTLISLVKYVLIV) traverse the membrane as a helical segment. Over 92 to 152 (LRADDGGEGG…MLERYRVLQR (61 aa)) the chain is Cytoplasmic. A helical membrane pass occupies residues 153–173 (LLLLFALLGTCMVIGDGVLTP). At 174–194 (AVSVYSAVSGLELSMEHEHHK) the chain is on the extracellular side. A helical membrane pass occupies residues 195–215 (YVQLPVTCAILIGLFALQHYG). Residues 216–218 (THR) lie on the Cytoplasmic side of the membrane. The chain crosses the membrane as a helical span at residues 219–239 (VGFIFAPIVCVWLLCISAIGV). The Extracellular portion of the chain corresponds to 240–267 (YNIVHWNHHVYRALSPYYMYQFLKKTQT). A helical membrane pass occupies residues 268–288 (GGWMSLGGILLCVTGSEAMYA). At 289–299 (DLGHFSQSSIK) the chain is on the cytoplasmic side. The chain crosses the membrane as a helical span at residues 300-320 (IAFMSVVYPALVLAYMGQAAY). At 321–346 (ISQHHSFENAYHIGFYVSVPEKLRWP) the chain is on the extracellular side. Residues 347–367 (VLVIAILAAVVGSQAVITGTF) form a helical membrane-spanning segment. Residues 368-394 (SIIKQCSSLSCFPGVKIVHTSSTVHGQ) are Cytoplasmic-facing. The chain crosses the membrane as a helical span at residues 395–415 (IYIPEINWILMILCLAVTLGF). At 416-425 (RNTKHLANAQ) the chain is on the extracellular side. The chain crosses the membrane as a helical span at residues 426-446 (GLAVITVMLVTTCLMSLVIVL). Residues 447-451 (CWNKS) are Cytoplasmic-facing. A helical transmembrane segment spans residues 452–472 (IFLALGFLIFFGTIEVLYFSA). The Extracellular portion of the chain corresponds to 473–479 (SLVKFHE). The helical transmembrane segment at 480–500 (GAWVPITLSFIFMIVMCVWHY) threads the bilayer. At 501–770 (GTIKKYEFDF…TLEVGMVYQV (270 aa)) the chain is on the cytoplasmic side.

This sequence belongs to the HAK/KUP transporter (TC 2.A.72.3) family.

Its subcellular location is the membrane. Its function is as follows. High-affinity potassium transporter. In Oryza sativa subsp. japonica (Rice), this protein is Potassium transporter 25 (HAK25).